A 146-amino-acid polypeptide reads, in one-letter code: Putative pre-16S rRNA nuclease (146 aa).

The protein belongs to the YqgF nuclease family.

Its subcellular location is the cytoplasm. Could be a nuclease involved in processing of the 5'-end of pre-16S rRNA. This Paraburkholderia phytofirmans (strain DSM 17436 / LMG 22146 / PsJN) (Burkholderia phytofirmans) protein is Putative pre-16S rRNA nuclease.